Here is a 418-residue protein sequence, read N- to C-terminus: AP-3 complex subunit mu-1 (418 aa).

The 242-residue stretch at 176-417 (NNEAYFDVVE…VTKAGKFQVR (242 aa)) folds into the MHD domain.

Belongs to the adaptor complexes medium subunit family. In terms of assembly, adaptor protein complex 3 (AP-3) is a heterotetramer composed of two large adaptins (delta-type subunit AP3D1 and beta-type subunit AP3B1 or AP3B2), a medium adaptin (mu-type subunit AP3M1 or AP3M2) and a small adaptin (sigma-type subunit APS1 or AP3S2). Interacts with AGAP1. AP-3 associates with the BLOC-1 complex.

The protein resides in the golgi apparatus. It is found in the cytoplasmic vesicle membrane. Part of the AP-3 complex, an adaptor-related complex which is not clathrin-associated. The complex is associated with the Golgi region as well as more peripheral structures. It facilitates the budding of vesicles from the Golgi membrane and may be directly involved in trafficking to lysosomes. In concert with the BLOC-1 complex, AP-3 is required to target cargos into vesicles assembled at cell bodies for delivery into neurites and nerve terminals. In Bos taurus (Bovine), this protein is AP-3 complex subunit mu-1 (AP3M1).